We begin with the raw amino-acid sequence, 401 residues long: tRNA(Met) cytidine acetate ligase (401 aa).

Residues 7–20 (IVEYNPFHNGHLYH), glycine 102, asparagine 164, and arginine 189 each bind ATP.

It belongs to the TmcAL family.

It localises to the cytoplasm. It catalyses the reaction cytidine(34) in elongator tRNA(Met) + acetate + ATP = N(4)-acetylcytidine(34) in elongator tRNA(Met) + AMP + diphosphate. Its function is as follows. Catalyzes the formation of N(4)-acetylcytidine (ac(4)C) at the wobble position of elongator tRNA(Met), using acetate and ATP as substrates. First activates an acetate ion to form acetyladenylate (Ac-AMP) and then transfers the acetyl group to tRNA to form ac(4)C34. This chain is tRNA(Met) cytidine acetate ligase, found in Thermoanaerobacter pseudethanolicus (strain ATCC 33223 / 39E) (Clostridium thermohydrosulfuricum).